The chain runs to 500 residues: NAD(P)H-quinone oxidoreductase chain 4, chloroplastic (500 aa).

14 consecutive transmembrane segments (helical) span residues 4 to 24 (FPWLTIIVVLPIFAGSLIFFL), 35 to 55 (YTICICMLELLLTTYAFCYHF), 87 to 107 (LGPVLLTGFITTLATLAAWPV), 113 to 130 (LFHFLMLAMYSGQIGSFS), 134 to 154 (LLLFFIMWELELIPVYLLLSM), 167 to 187 (FILYTAGGSIFLLMGVLGVGL), 207 to 227 (VALEIIFYIGFLIAFAVKLPI), 242 to 262 (HYSTCMLLAGILLKMGAYGLI), 272 to 292 (AHSIFSPWLMVVGTIQIIYAA), 305 to 325 (IAYSSVSHMGFILIGIASITD), 330 to 350 (GAILQIISHGFIGAALFFLAG), 386 to 406 (LALPGMSGFVAEVLVFLGIIT), 416 to 436 (IAITFVMAIGMILTPIYLLSM), and 462 to 482 (LFVSISIFIPVIGIGMYPDFV).

This sequence belongs to the complex I subunit 4 family.

It is found in the plastid. Its subcellular location is the chloroplast thylakoid membrane. The catalysed reaction is a plastoquinone + NADH + (n+1) H(+)(in) = a plastoquinol + NAD(+) + n H(+)(out). It carries out the reaction a plastoquinone + NADPH + (n+1) H(+)(in) = a plastoquinol + NADP(+) + n H(+)(out). This chain is NAD(P)H-quinone oxidoreductase chain 4, chloroplastic, found in Helianthus annuus (Common sunflower).